Reading from the N-terminus, the 398-residue chain is Organelle RRM domain-containing protein 1, chloroplastic (398 aa).

A chloroplast-targeting transit peptide spans 1–88; that stretch reads MDTALPSVLI…RWVVVMDTPP (88 aa). Low complexity predominate over residues 54-70; it reads LLASSSESPPAQLAAAS. The disordered stretch occupies residues 54–79; the sequence is LLASSSESPPAQLAAASTESQSRSSR. The RRM domain maps to 299–377; sequence KRLFVTGLSF…WMIVVDVAKT (79 aa).

Its subcellular location is the plastid. It localises to the chloroplast. Its function is as follows. Involved in C-to-U editing of chloroplastic RNA. Functions as major chloroplastic editing factor. Controls a majority of the chloroplastic editing sites. The sequence is that of Organelle RRM domain-containing protein 1, chloroplastic (ORRM1) from Zea mays (Maize).